Reading from the N-terminus, the 384-residue chain is Probable UDP-galactopyranose mutase (384 aa).

A signal peptide spans 1 to 19 (MNNKNIMIVGAGFSGVVIA). FAD contacts are provided by residues S14, 33-34 (DR), N41, and 60-61 (HI). 5 residues coordinate UDP-alpha-D-galactose: N84, F151, T156, W160, and Y185. F219 is an FAD binding site. UDP-alpha-D-galactose-binding residues include N270, R280, and Y314. R343 contributes to the FAD binding site. Position 349 (Y349) interacts with UDP-alpha-D-galactose. 350 to 355 (LDMDVT) contacts FAD.

Belongs to the UDP-galactopyranose/dTDP-fucopyranose mutase family. Homodimer. FAD serves as cofactor.

The enzyme catalyses UDP-alpha-D-galactose = UDP-alpha-D-galactofuranose. Its pathway is bacterial outer membrane biogenesis; LPS O-antigen biosynthesis. Its function is as follows. Catalyzes the interconversion through a 2-keto intermediate of uridine diphosphogalactopyranose (UDP-GalP) into uridine diphosphogalactofuranose (UDP-GalF). This Klebsiella pneumoniae protein is Probable UDP-galactopyranose mutase (rfbD).